The following is a 360-amino-acid chain: ASTRA-associated protein 1 (360 aa).

WD repeat units lie at residues Ala-9–Arg-46, Ala-49–Gly-86, Arg-167–Leu-205, and Pro-317–Leu-357.

This sequence belongs to the WD repeat ASA1 family. As to quaternary structure, component of the ASTRA chromatin remodeling machinery complex.

It is found in the nucleus. Component of the ASTRA complex involved in chromatin remodeling. The protein is ASTRA-associated protein 1 (ASA1) of Clavispora lusitaniae (strain ATCC 42720) (Yeast).